The sequence spans 226 residues: Cytochrome c-553I (226 aa).

The N-terminal stretch at 1 to 22 (MTSKTTASLLAICVACAASAIA) is a signal peptide. Residues 43–68 (AAVSGDAHEQPAAEAPAEEEEETPAV) are disordered. Positions 125, 128, 129, and 173 each coordinate heme. The tract at residues 203–226 (RGRPAKREDKSDEFVAQEDSCMSG) is disordered.

Binds 1 heme group per subunit.

The protein localises to the periplasm. This Paracoccus denitrificans protein is Cytochrome c-553I (cycB).